The following is a 198-amino-acid chain: Small ribosomal subunit protein uS2 (198 aa).

The protein belongs to the universal ribosomal protein uS2 family.

This Methanothermobacter thermautotrophicus (strain ATCC 29096 / DSM 1053 / JCM 10044 / NBRC 100330 / Delta H) (Methanobacterium thermoautotrophicum) protein is Small ribosomal subunit protein uS2 (rps2).